The primary structure comprises 344 residues: 2,3,4,5-tetrahydropyridine-2,6-dicarboxylate N-succinyltransferase (344 aa).

Glutamate 205 lines the Mg(2+) pocket. The active-site Acyl-anhydride intermediate is the glutamate 221. Succinyl-CoA-binding positions include arginine 223, glycine 238, serine 241, alanine 264, 279–280 (EA), glycine 287, lysine 304, and 317–320 (RRNS).

This sequence belongs to the type 2 tetrahydrodipicolinate N-succinyltransferase family. In terms of assembly, homotrimer.

The protein resides in the cytoplasm. It catalyses the reaction (S)-2,3,4,5-tetrahydrodipicolinate + succinyl-CoA + H2O = (S)-2-succinylamino-6-oxoheptanedioate + CoA. The protein operates within amino-acid biosynthesis; L-lysine biosynthesis via DAP pathway; LL-2,6-diaminopimelate from (S)-tetrahydrodipicolinate (succinylase route): step 1/3. Catalyzes the conversion of the cyclic tetrahydrodipicolinate (THDP) into the acyclic N-succinyl-L-2-amino-6-oxopimelate using succinyl-CoA. The sequence is that of 2,3,4,5-tetrahydropyridine-2,6-dicarboxylate N-succinyltransferase from Pseudomonas paraeruginosa (strain DSM 24068 / PA7) (Pseudomonas aeruginosa (strain PA7)).